Consider the following 298-residue polypeptide: Ethanolamine ammonia-lyase small subunit (298 aa).

Residues alanine 15–threonine 43 are disordered. Adenosylcob(III)alamin-binding residues include valine 210, glutamate 231, and cysteine 261.

This sequence belongs to the EutC family. As to quaternary structure, the basic unit is a heterodimer which dimerizes to form tetramers. The heterotetramers trimerize; 6 large subunits form a core ring with 6 small subunits projecting outwards. The cofactor is adenosylcob(III)alamin.

Its subcellular location is the bacterial microcompartment. The enzyme catalyses ethanolamine = acetaldehyde + NH4(+). It participates in amine and polyamine degradation; ethanolamine degradation. In terms of biological role, catalyzes the deamination of various vicinal amino-alcohols to oxo compounds. Allows this organism to utilize ethanolamine as the sole source of nitrogen and carbon in the presence of external vitamin B12. The polypeptide is Ethanolamine ammonia-lyase small subunit (Salmonella arizonae (strain ATCC BAA-731 / CDC346-86 / RSK2980)).